The chain runs to 471 residues: (13S,14R)-1,13-dihydroxy-N-methylcanadine 13-O-acetyltransferase AT1 (471 aa).

The protein belongs to the plant acyltransferase family.

It catalyses the reaction (13S,14R)-1,13-dihydroxy-N-methylcanadine + acetyl-CoA = (13S,14R)-13-O-acetyl-1-hydroxy-N-methylcanadine + CoA. It participates in alkaloid biosynthesis. Functionally, acetyltransferase involved in the biosynthesis of the benzylisoquinoline alkaloid noscapine. Converts (13S,14R)-1,13-dihydroxy-N-methylcanadine to (13S,14R)-13-O-acetyl-1-hydroxy-N-methylcanadine. The protein is (13S,14R)-1,13-dihydroxy-N-methylcanadine 13-O-acetyltransferase AT1 of Papaver somniferum (Opium poppy).